Consider the following 422-residue polypeptide: UDP-N-acetylglucosamine 1-carboxyvinyltransferase (422 aa).

22–23 (KN) provides a ligand contact to phosphoenolpyruvate. Arg-92 lines the UDP-N-acetyl-alpha-D-glucosamine pocket. Cys-116 (proton donor) is an active-site residue. Cys-116 bears the 2-(S-cysteinyl)pyruvic acid O-phosphothioketal mark. UDP-N-acetyl-alpha-D-glucosamine contacts are provided by residues 121 to 125 (RPVDL), Asp-307, and Leu-329.

It belongs to the EPSP synthase family. MurA subfamily.

It localises to the cytoplasm. It carries out the reaction phosphoenolpyruvate + UDP-N-acetyl-alpha-D-glucosamine = UDP-N-acetyl-3-O-(1-carboxyvinyl)-alpha-D-glucosamine + phosphate. It functions in the pathway cell wall biogenesis; peptidoglycan biosynthesis. Its function is as follows. Cell wall formation. Adds enolpyruvyl to UDP-N-acetylglucosamine. This chain is UDP-N-acetylglucosamine 1-carboxyvinyltransferase, found in Aliarcobacter butzleri (strain RM4018) (Arcobacter butzleri).